Reading from the N-terminus, the 331-residue chain is 6-phosphogluconolactonase (331 aa).

It belongs to the cycloisomerase 2 family.

The enzyme catalyses 6-phospho-D-glucono-1,5-lactone + H2O = 6-phospho-D-gluconate + H(+). Its pathway is carbohydrate degradation; pentose phosphate pathway; D-ribulose 5-phosphate from D-glucose 6-phosphate (oxidative stage): step 2/3. In terms of biological role, catalyzes the hydrolysis of 6-phosphogluconolactone to 6-phosphogluconate. In Buchnera aphidicola subsp. Baizongia pistaciae (strain Bp), this protein is 6-phosphogluconolactonase.